The following is a 490-amino-acid chain: GTPase Der (490 aa).

EngA-type G domains follow at residues 3-166 (PVIA…PRDE) and 196-369 (IKIA…KSAV). Residues 9–16 (GRPNVGKS), 56–60 (DTGGI), 118–121 (NKID), 202–209 (GRPNVGKS), 249–253 (DTAGV), and 314–317 (NKWD) contribute to the GTP site. The KH-like domain occupies 370 to 454 (TRWPTSRLTQ…PIRIEFKGGE (85 aa)). Residues 452 to 490 (GGENPYEGNKNTLTDRQVNKKRRMMSHHKKADKKRRDKR) form a disordered region. Over residues 470 to 490 (NKKRRMMSHHKKADKKRRDKR) the composition is skewed to basic residues.

It belongs to the TRAFAC class TrmE-Era-EngA-EngB-Septin-like GTPase superfamily. EngA (Der) GTPase family. Associates with the 50S ribosomal subunit.

In terms of biological role, GTPase that plays an essential role in the late steps of ribosome biogenesis. The protein is GTPase Der of Pseudomonas syringae pv. syringae (strain B728a).